The following is a 347-amino-acid chain: Methionine import ATP-binding protein MetN (347 aa).

One can recognise an ABC transporter domain in the interval 2-241; it reads IKLEGVSKTY…PATRLGRDFL (240 aa). 38–45 contributes to the ATP binding site; sequence GLSGAGKS.

This sequence belongs to the ABC transporter superfamily. Methionine importer (TC 3.A.1.24) family. The complex is composed of two ATP-binding proteins (MetN), two transmembrane proteins (MetI) and a solute-binding protein (MetQ).

The protein localises to the cell inner membrane. The enzyme catalyses L-methionine(out) + ATP + H2O = L-methionine(in) + ADP + phosphate + H(+). The catalysed reaction is D-methionine(out) + ATP + H2O = D-methionine(in) + ADP + phosphate + H(+). In terms of biological role, part of the ABC transporter complex MetNIQ involved in methionine import. Responsible for energy coupling to the transport system. The protein is Methionine import ATP-binding protein MetN of Chromohalobacter salexigens (strain ATCC BAA-138 / DSM 3043 / CIP 106854 / NCIMB 13768 / 1H11).